Reading from the N-terminus, the 650-residue chain is RALRPDPGPAMSFFRRKARGREQEKTSDVPSGKASISVHSPQKSTKNHALLEAAGPSPVAISAISANMDSFSRSRTATLKKQPSHMEAAHFGDLGRSCLDYQAQETKSSLSKTLEQVLRDAVVLPYFIQFMELRRMEHLVKFWLEAESFHSTTWSRIRAHSLNTVKQSSLAEPVSPTQKHETAAAPVTESLDQRLEEPSSAQLLLTQSEGIDLTDRTSNTQNHLLLSPECDGARALHPAAARTGARRASLEPQESCRLTVASRNSPSSPLKEVSGKLMKSIEQDAVNTFTKYISPDAAKPIPITEAMRNDIIAKICGEDGQVDPNCFVLAQSIVFSAMEQEHFSEFLRSHHFCKYQIEVLTSGTVYLADILFCESALFYSSEYMEKEDAVNILQFWLAADNFQSQPAAKKGQYDGQEAQNDAMILYDKYFSLQATHPLGFDDVVRLEIESNNICREGGPLPNCFTTPLRQAWTTMEKVFLPGFLSSSLYYKYLNDLIHSVRGDEFLGASASLAAQGSGGPPDDPLPGASDPSASQSSVKKASVKILKNFDEAIIVDAASLDPESLYQRTYAGKMTFGRVSDLGQFIRESEPEPDVKKSKGSMFSQAMKKWVQGNSDEAQEELAWKIAKMIVSDVMQQAQCAQPGETSAKL.

Residues 1–16 constitute a mitochondrion transit peptide; that stretch reads RALRPDPGPAMSFFRR. Disordered stretches follow at residues 1–45 and 168–192; these read RALR…QKST and SSLAEPVSPTQKHETAAAPVTESLD. At Ser-40 the chain carries Phosphoserine. 2 RGS domains span residues 113–356 and 366–493; these read TLEQ…CKYQ and YLAD…YKYL. Phosphoserine is present on Ser-268. The disordered stretch occupies residues 512 to 535; that stretch reads LAAQGSGGPPDDPLPGASDPSASQ. A compositionally biased stretch (low complexity) spans 525-535; it reads LPGASDPSASQ. Residues 622-635 are PKA-RII subunit binding; the sequence is LAWKIAKMIVSDVM.

It localises to the mitochondrion. Its subcellular location is the membrane. The protein localises to the cytoplasm. Its function is as follows. Differentially targeted protein that binds to type I and II regulatory subunits of protein kinase A and anchors them to the mitochondria or the plasma membrane. Although the physiological relevance between PKA and AKAPS with mitochondria is not fully understood, one idea is that BAD, a proapoptotic member, is phosphorylated and inactivated by mitochondria-anchored PKA. It cannot be excluded too that it may facilitate PKA as well as G protein signal transduction, by acting as an adapter for assembling multiprotein complexes. With its RGS domain, it could lead to the interaction to G-alpha proteins, providing a link between the signaling machinery and the downstream kinase. The polypeptide is A-kinase anchor protein 10, mitochondrial (AKAP10) (Sus scrofa (Pig)).